The chain runs to 387 residues: Chaperone protein DnaJ (387 aa).

In terms of domain architecture, J spans 6 to 71 (DYYEILGVPR…EKRRKYDQFG (66 aa)). Residues 146 to 228 (GCEKEIPIYR…CGGTGTVRRQ (83 aa)) form a CR-type zinc finger. Residues Cys-159, Cys-162, Cys-176, Cys-179, Cys-202, Cys-205, Cys-216, and Cys-219 each coordinate Zn(2+). CXXCXGXG motif repeat units follow at residues 159–166 (CSVCGGSG), 176–183 (CQKCGGTG), 202–209 (CDACGGVG), and 216–223 (CRECGGTG).

Belongs to the DnaJ family. In terms of assembly, homodimer. Requires Zn(2+) as cofactor.

The protein resides in the cytoplasm. Participates actively in the response to hyperosmotic and heat shock by preventing the aggregation of stress-denatured proteins and by disaggregating proteins, also in an autonomous, DnaK-independent fashion. Unfolded proteins bind initially to DnaJ; upon interaction with the DnaJ-bound protein, DnaK hydrolyzes its bound ATP, resulting in the formation of a stable complex. GrpE releases ADP from DnaK; ATP binding to DnaK triggers the release of the substrate protein, thus completing the reaction cycle. Several rounds of ATP-dependent interactions between DnaJ, DnaK and GrpE are required for fully efficient folding. Also involved, together with DnaK and GrpE, in the DNA replication of plasmids through activation of initiation proteins. In Caldicellulosiruptor saccharolyticus (strain ATCC 43494 / DSM 8903 / Tp8T 6331), this protein is Chaperone protein DnaJ.